Reading from the N-terminus, the 735-residue chain is Delta-1-pyrroline-5-carboxylate synthase 2 (735 aa).

A glutamate 5-kinase region spans residues 1–315; the sequence is MGRGGIGGAG…WGCSKEATAR (315 aa). Positions 79, 176, and 195 each coordinate substrate. ATP is bound by residues 215–216, 221–226, and 255–261; these read SD, YSGPPS, and RGGMQAK. Residues 316–735 are gamma-glutamyl phosphate reductase; the sequence is EMAVAARDCS…VYTHRELPLQ (420 aa).

This sequence in the N-terminal section; belongs to the glutamate 5-kinase family. The protein in the C-terminal section; belongs to the gamma-glutamyl phosphate reductase family.

It catalyses the reaction L-glutamate + ATP = L-glutamyl 5-phosphate + ADP. The catalysed reaction is L-glutamate 5-semialdehyde + phosphate + NADP(+) = L-glutamyl 5-phosphate + NADPH + H(+). The protein operates within amino-acid biosynthesis; L-proline biosynthesis; L-glutamate 5-semialdehyde from L-glutamate: step 1/2. Its pathway is amino-acid biosynthesis; L-proline biosynthesis; L-glutamate 5-semialdehyde from L-glutamate: step 2/2. Its activity is regulated as follows. Feedback regulated by proline. In terms of biological role, P5CS plays a key role in proline biosynthesis, leading to osmoregulation in plants. Involved in abiotic stress tolerance. The chain is Delta-1-pyrroline-5-carboxylate synthase 2 from Oryza sativa subsp. japonica (Rice).